A 113-amino-acid chain; its full sequence is Class I hydrophobin POH3 (113 aa).

Residues 1–21 (MFSRVIFCTFLILPLLAAATA) form the signal peptide. 4 disulfide bridges follow: Cys-32–Cys-92, Cys-39–Cys-86, Cys-40–Cys-73, and Cys-93–Cys-106. A glycan (N-linked (GlcNAc...) asparagine) is linked at Asn-110.

It belongs to the fungal hydrophobin family. Self-assembles to form functional amyloid fibrils called rodlets. Self-assembly into fibrillar rodlets occurs spontaneously at hydrophobic:hydrophilic interfaces and the rodlets further associate laterally to form amphipathic monolayers. In terms of tissue distribution, expressionn is switched off in the fruiting bodies but abundantly expressed in the vegetative mycelium of both monokaryon and dikaryon.

The protein resides in the secreted. The protein localises to the cell wall. In terms of biological role, aerial growth, conidiation, and dispersal of filamentous fungi in the environment rely upon a capability of their secreting small amphipathic proteins called hydrophobins (HPBs) with low sequence identity. Class I can self-assemble into an outermost layer of rodlet bundles on aerial cell surfaces, conferring cellular hydrophobicity that supports fungal growth, development and dispersal; whereas Class II form highly ordered films at water-air interfaces through intermolecular interactions but contribute nothing to the rodlet structure. POH3 is a class I hydrophobin that causes a large drop in the water-surface tension, enabling hyphae to breach the interface and grow into the air, in both the primary and the secondary mycelium. In the latter mycelium POH3 maight also play a role in the emergence of fruiting bodies. Secreted POH3 could also play a role in facilitating lignin degradation. This is Class I hydrophobin POH3 from Pleurotus ostreatus (Oyster mushroom).